The chain runs to 264 residues: MDDKLVIAGREYGSRLLVGTGKYKDFEQTAAALDVSGTEIVTAAIRRVNLGQNANEPNLLDFLPKNRYNLLPNTAGCYSAEDAIRTLRLARELLDDHRFVKLEVLGDPNNLYPNVRETLKAAEVLVAEGFDVLVYTSDDPIVARELEQIGCCAIMPLASLIGSGMGILNPWNLQLIIEQSKVPVIVDAGVGTASDAAIAMELGCDGVLMNTAIAAARDPVRMAHAMKLAVEAGRAAYLAGRMPKRFYSAVPSSPSEGVISSVKS.

K101 acts as the Schiff-base intermediate with DXP in catalysis. 1-deoxy-D-xylulose 5-phosphate contacts are provided by residues G162, A188–G189, and N210–T211.

Belongs to the ThiG family. As to quaternary structure, homotetramer. Forms heterodimers with either ThiH or ThiS.

It localises to the cytoplasm. It carries out the reaction [ThiS sulfur-carrier protein]-C-terminal-Gly-aminoethanethioate + 2-iminoacetate + 1-deoxy-D-xylulose 5-phosphate = [ThiS sulfur-carrier protein]-C-terminal Gly-Gly + 2-[(2R,5Z)-2-carboxy-4-methylthiazol-5(2H)-ylidene]ethyl phosphate + 2 H2O + H(+). It functions in the pathway cofactor biosynthesis; thiamine diphosphate biosynthesis. Catalyzes the rearrangement of 1-deoxy-D-xylulose 5-phosphate (DXP) to produce the thiazole phosphate moiety of thiamine. Sulfur is provided by the thiocarboxylate moiety of the carrier protein ThiS. In vitro, sulfur can be provided by H(2)S. In Chromobacterium violaceum (strain ATCC 12472 / DSM 30191 / JCM 1249 / CCUG 213 / NBRC 12614 / NCIMB 9131 / NCTC 9757 / MK), this protein is Thiazole synthase.